The following is an 874-amino-acid chain: Adhesion G-protein coupled receptor D1 (874 aa).

An N-terminal signal peptide occupies residues 1–25 (MEKLLRLCCWYSWLLLFYYNFQVRG). Topologically, residues 26-567 (VYSRSQDHPG…LARGHQVALS (542 aa)) are extracellular. The Pentraxin (PTX) domain occupies 79 to 276 (KGVTLLYYGR…ASPVMPTDAY (198 aa)). 9 N-linked (GlcNAc...) asparagine glycosylation sites follow: N90, N185, N282, N302, N319, N394, N476, N501, and N533. In terms of domain architecture, GAIN-B spans 371–557 (QVTVEGSSAM…AILMQVVPLE (187 aa)). 2 disulfide bridges follow: C510–C539 and C527–C541. Residues 510-557 (CAFLDFSSGEGVWSNHGCALTRGNLTYSVCRCTHLTNFAILMQVVPLE) form a GPS region. Residues 546-554 (NFAILMQVV) form a stachel region. Q563 contacts 17beta-hydroxy-5alpha-androstan-3-one. The chain crosses the membrane as a helical span at residues 568 to 590 (SISYVGCSLSVLCLVATLVTFAV). Residues 591-601 (LSSVSTIRNQR) are Cytoplasmic-facing. Residues 602–623 (YHIHANLSFAVLVAQVLLLISF) form a helical membrane-spanning segment. Over 624–632 (RLEPGTTPC) the chain is Extracellular. A disulfide bridge connects residues C632 and C704. Residues 633–655 (QVMAVLLHYFFLSAFAWMLVEGL) form a helical membrane-spanning segment. Over 656–673 (HLYSMVIKVFGSEDSKHR) the chain is Cytoplasmic. A helical transmembrane segment spans residues 674 to 695 (YYYGMGWGFPLLICIISLSFAM). Residues 696-710 (DSYGTSNNCWLSLAS) lie on the Extracellular side of the membrane. Residues 711–732 (GAIWAFVAPALFVIVVNIGILI) form a helical membrane-spanning segment. Residues 733–757 (AVTRVISQISADNYKIHGDPSAFKL) lie on the Cytoplasmic side of the membrane. Residues 758-780 (TAKAVAVLLPILGTSWVFGVLAV) form a helical membrane-spanning segment. Residues 781-783 (NGC) lie on the Extracellular side of the membrane. Residues 784–810 (AVVFQYMFATLNSLQGLFIFLFHCLLN) form a helical membrane-spanning segment. N795 provides a ligand contact to 17beta-hydroxy-5alpha-androstan-3-one. Over 811 to 874 (SEVRAAFKHK…SAHRVDLSAV (64 aa)) the chain is Cytoplasmic. The segment at 854–874 (TKLSPWDKSSHSAHRVDLSAV) is disordered. Residues 861-874 (KSSHSAHRVDLSAV) show a composition bias toward basic and acidic residues.

Belongs to the G-protein coupled receptor 2 family. Adhesion G-protein coupled receptor (ADGR) subfamily. As to quaternary structure, heterodimer of 2 chains generated by proteolytic processing; the large extracellular N-terminal fragment and the membrane-bound C-terminal fragment predominantly remain associated and non-covalently linked. Interacts with ESYT1; interaction takes place in absence of cytosolic calcium and inhibits the G protein-coupled receptor activity of ADGRD1. Autoproteolytically processed at the GPS region of the GAIN-B domain; this cleavage modulates receptor activity. Cleavage takes place early in the secretory pathway before N-glycosylation. As to expression, up-regulated in CD133(+) cell population of glioblastoma.

It is found in the cell membrane. Its activity is regulated as follows. Forms a heterodimer of 2 chains generated by proteolytic processing that remain associated through non-covalent interactions mediated by the GAIN-B domain. In the inactivated receptor, the Stachel sequence (also named stalk) is embedded in the GAIN-B domain, where it adopts a beta-strand conformation. On activation, the Stachel moves into the 7 transmembrane region and adopts a twisted hook-shaped configuration that forms contacts within the receptor, leading to coupling of a G-alpha protein, which activates signaling. The cleaved GAIN-B and N-terminal domains can then dissociate from the rest of the receptor. Interaction with ESYT1 in absence of cytosolic calcium inhibits the G protein-coupled receptor activity; interaction and inhibition is relieved when cytosolic calcium increases. Activated by AP503, a small molecule that activates ADGRD1 without activating androgen nuclear receptors: AP503 enhances muscle strength without eliciting androgenic adverse effects. Activated by the 8E3E8 antibody that targets the N-terminus. In terms of biological role, adhesion G-protein coupled receptor (aGPCR) for androgen hormone 5alpha-dihydrotestosterone (5alpha-DHT), also named 17beta-hydroxy-5alpha-androstan-3-one, the most potent hormone among androgens. Also activated by methenolone drug. Ligand binding causes a conformation change that triggers signaling via guanine nucleotide-binding proteins (G proteins) and modulates the activity of downstream effectors, such as adenylate cyclase. ADGRD1 is coupled to G(s) G proteins and mediates activation of adenylate cyclase activity. Acts as a 5alpha-DHT receptor in muscle cells, thereby increasing intracellular cyclic AMP (cAMP) levels and enhancing muscle strength. The sequence is that of Adhesion G-protein coupled receptor D1 from Homo sapiens (Human).